The sequence spans 331 residues: Cilia- and flagella-associated protein 119 (331 aa).

At serine 34 the chain carries Phosphoserine. 2 disordered regions span residues 236–271 (LWPESETEKEESKEMEEQAVTPQKEELETVAPPEPE) and 309–331 (SSKLTALERPFQLPPGKGKSKTK). A coiled-coil region spans residues 286–317 (VNKELEQLQGLVEERLKASEERLSSKLTALER).

The protein resides in the cell projection. The protein localises to the cilium. It localises to the flagellum. Its subcellular location is the cytoplasmic vesicle. It is found in the secretory vesicle. The protein resides in the acrosome. The protein localises to the cytoplasm. The polypeptide is Cilia- and flagella-associated protein 119 (Homo sapiens (Human)).